A 180-amino-acid polypeptide reads, in one-letter code: ATP synthase subunit delta (180 aa).

This sequence belongs to the ATPase delta chain family. In terms of assembly, F-type ATPases have 2 components, F(1) - the catalytic core - and F(0) - the membrane proton channel. F(1) has five subunits: alpha(3), beta(3), gamma(1), delta(1), epsilon(1). F(0) has three main subunits: a(1), b(2) and c(10-14). The alpha and beta chains form an alternating ring which encloses part of the gamma chain. F(1) is attached to F(0) by a central stalk formed by the gamma and epsilon chains, while a peripheral stalk is formed by the delta and b chains.

Its subcellular location is the cell membrane. Functionally, f(1)F(0) ATP synthase produces ATP from ADP in the presence of a proton or sodium gradient. F-type ATPases consist of two structural domains, F(1) containing the extramembraneous catalytic core and F(0) containing the membrane proton channel, linked together by a central stalk and a peripheral stalk. During catalysis, ATP synthesis in the catalytic domain of F(1) is coupled via a rotary mechanism of the central stalk subunits to proton translocation. Its function is as follows. This protein is part of the stalk that links CF(0) to CF(1). It either transmits conformational changes from CF(0) to CF(1) or is implicated in proton conduction. This is ATP synthase subunit delta from Bacillus mycoides (strain KBAB4) (Bacillus weihenstephanensis).